A 61-amino-acid polypeptide reads, in one-letter code: Large ribosomal subunit protein bL28 (61 aa).

A disordered region spans residues 1-26 (MAKDYVTGKRTHFGNTRSHALNHSRR).

Belongs to the bacterial ribosomal protein bL28 family.

In Lactiplantibacillus plantarum (strain ATCC BAA-793 / NCIMB 8826 / WCFS1) (Lactobacillus plantarum), this protein is Large ribosomal subunit protein bL28.